The chain runs to 243 residues: Cytochrome c oxidase subunit 2 (243 aa).

The Mitochondrial intermembrane segment spans residues 1 to 34; the sequence is MNNIIHNDAPTPWGIYFQDGASPVYDGIVELHDQ. Residues 35-55 form a helical membrane-spanning segment; that stretch reads VLFYLLIVLVGVSWILFSTIL. Topologically, residues 56–74 are mitochondrial matrix; sequence RFRGSGIVHKYHNHSTTIE. Residues 75-97 form a helical membrane-spanning segment; that stretch reads FVWTVSPALLLIAIAFPSFKLLY. The Mitochondrial intermembrane segment spans residues 98-243; it reads LMDEVIDPSI…EKFLSWLDNQ (146 aa). Cu cation is bound by residues histidine 178, cysteine 213, glutamate 215, cysteine 217, histidine 221, and methionine 224. Glutamate 215 lines the Mg(2+) pocket.

This sequence belongs to the cytochrome c oxidase subunit 2 family. Component of the cytochrome c oxidase (complex IV, CIV), a multisubunit enzyme composed of a catalytic core of 3 subunits and several supernumerary subunits. The complex exists as a monomer or a dimer and forms supercomplexes (SCs) in the inner mitochondrial membrane with ubiquinol-cytochrome c oxidoreductase (cytochrome b-c1 complex, complex III, CIII). Requires Cu cation as cofactor.

The protein localises to the mitochondrion inner membrane. It carries out the reaction 4 Fe(II)-[cytochrome c] + O2 + 8 H(+)(in) = 4 Fe(III)-[cytochrome c] + 2 H2O + 4 H(+)(out). Functionally, component of the cytochrome c oxidase, the last enzyme in the mitochondrial electron transport chain which drives oxidative phosphorylation. The respiratory chain contains 3 multisubunit complexes succinate dehydrogenase (complex II, CII), ubiquinol-cytochrome c oxidoreductase (cytochrome b-c1 complex, complex III, CIII) and cytochrome c oxidase (complex IV, CIV), that cooperate to transfer electrons derived from NADH and succinate to molecular oxygen, creating an electrochemical gradient over the inner membrane that drives transmembrane transport and the ATP synthase. Cytochrome c oxidase is the component of the respiratory chain that catalyzes the reduction of oxygen to water. Electrons originating from reduced cytochrome c in the intermembrane space (IMS) are transferred via the dinuclear copper A center (CU(A)) of subunit 2 and heme A of subunit 1 to the active site in subunit 1, a binuclear center (BNC) formed by heme A3 and copper B (CU(B)). The BNC reduces molecular oxygen to 2 water molecules using 4 electrons from cytochrome c in the IMS and 4 protons from the mitochondrial matrix. The polypeptide is Cytochrome c oxidase subunit 2 (Pneumocystis carinii).